The sequence spans 113 residues: UPF0145 protein SynWH7803_1684 (113 aa).

It belongs to the UPF0145 family.

In Synechococcus sp. (strain WH7803), this protein is UPF0145 protein SynWH7803_1684.